A 375-amino-acid chain; its full sequence is Succinyl-diaminopimelate desuccinylase (375 aa).

Histidine 66 contacts Zn(2+). The active site involves aspartate 68. Aspartate 99 is a Zn(2+) binding site. The Proton acceptor role is filled by glutamate 133. Zn(2+) contacts are provided by glutamate 134, glutamate 162, and histidine 348.

The protein belongs to the peptidase M20A family. DapE subfamily. In terms of assembly, homodimer. Zn(2+) serves as cofactor. Requires Co(2+) as cofactor.

The enzyme catalyses N-succinyl-(2S,6S)-2,6-diaminopimelate + H2O = (2S,6S)-2,6-diaminopimelate + succinate. Its pathway is amino-acid biosynthesis; L-lysine biosynthesis via DAP pathway; LL-2,6-diaminopimelate from (S)-tetrahydrodipicolinate (succinylase route): step 3/3. Its function is as follows. Catalyzes the hydrolysis of N-succinyl-L,L-diaminopimelic acid (SDAP), forming succinate and LL-2,6-diaminopimelate (DAP), an intermediate involved in the bacterial biosynthesis of lysine and meso-diaminopimelic acid, an essential component of bacterial cell walls. The sequence is that of Succinyl-diaminopimelate desuccinylase from Escherichia coli O157:H7.